Reading from the N-terminus, the 120-residue chain is U13-lycotoxin-Ls1a (120 aa).

Positions 1-16 are cleaved as a signal peptide; it reads MKILFVLISILYAVYC. The propeptide occupies 17 to 54; that stretch reads FSSEEDVDSAYLANELEPVEDINSEQYAALEPKEEQER. Intrachain disulfides connect Cys-56-Cys-70, Cys-63-Cys-76, Cys-69-Cys-87, and Cys-78-Cys-85. The region spanning 56–95 is the Agouti domain; sequence CADMGQDCKDDCDCCLNIATCNCWFGRYFCSCTFGDYQTC.

The protein belongs to the neurotoxin 05 (agouti) family. Contains 6 disulfide bonds. As to expression, expressed by the venom gland.

The protein localises to the secreted. The chain is U13-lycotoxin-Ls1a from Lycosa singoriensis (Wolf spider).